We begin with the raw amino-acid sequence, 467 residues long: ATP-dependent protease ATPase subunit HslU (467 aa).

ATP contacts are provided by residues Val22 and 64–69 (GVGKTE). The interval 149 to 192 (QTNNPLESLFGGAIPNFGQNNEDEEEPPTEEIKTKRSEIKRQLE) is disordered. Residues 178–192 (EEIKTKRSEIKRQLE) are compositionally biased toward basic and acidic residues. ATP is bound by residues Asp280, Glu345, and Arg417.

Belongs to the ClpX chaperone family. HslU subfamily. A double ring-shaped homohexamer of HslV is capped on each side by a ring-shaped HslU homohexamer. The assembly of the HslU/HslV complex is dependent on binding of ATP.

It is found in the cytoplasm. Its function is as follows. ATPase subunit of a proteasome-like degradation complex; this subunit has chaperone activity. The binding of ATP and its subsequent hydrolysis by HslU are essential for unfolding of protein substrates subsequently hydrolyzed by HslV. HslU recognizes the N-terminal part of its protein substrates and unfolds these before they are guided to HslV for hydrolysis. The polypeptide is ATP-dependent protease ATPase subunit HslU (Staphylococcus aureus (strain bovine RF122 / ET3-1)).